The chain runs to 448 residues: D-inositol 3-phosphate glycosyltransferase (448 aa).

Residues His35, 46–51 (DAGGLN), Lys104, Tyr137, Thr161, and Arg181 each bind 1D-myo-inositol 3-phosphate. Gly49 provides a ligand contact to UDP-N-acetyl-alpha-D-glucosamine. Residues Arg255, Lys260, and Met321 each contribute to the UDP-N-acetyl-alpha-D-glucosamine site. 3 residues coordinate Mg(2+): Tyr330, Arg331, and Ala333. Residues Glu343 and Glu351 each contribute to the UDP-N-acetyl-alpha-D-glucosamine site. Residue Thr357 participates in Mg(2+) binding.

It belongs to the glycosyltransferase group 1 family. MshA subfamily. Homodimer.

It carries out the reaction 1D-myo-inositol 3-phosphate + UDP-N-acetyl-alpha-D-glucosamine = 1D-myo-inositol 2-acetamido-2-deoxy-alpha-D-glucopyranoside 3-phosphate + UDP + H(+). Its function is as follows. Catalyzes the transfer of a N-acetyl-glucosamine moiety to 1D-myo-inositol 3-phosphate to produce 1D-myo-inositol 2-acetamido-2-deoxy-glucopyranoside 3-phosphate in the mycothiol biosynthesis pathway. This Acidothermus cellulolyticus (strain ATCC 43068 / DSM 8971 / 11B) protein is D-inositol 3-phosphate glycosyltransferase.